The sequence spans 448 residues: U1 small nuclear ribonucleoprotein 70 kDa (448 aa).

The tract at residues threonine 91–glycine 201 is required for interaction with U1 RNA. An RRM domain is found at arginine 102 to alanine 180. The disordered stretch occupies residues proline 188 to glutamine 448. Residues leucine 191–arginine 200 are compositionally biased toward gly residues. Basic and acidic residues-rich tracts occupy residues asparagine 206–proline 234 and glutamate 262–arginine 272. Over residues serine 281–alanine 293 the composition is skewed to basic residues. Composition is skewed to basic and acidic residues over residues glycine 294–arginine 320 and arginine 346–glutamate 376. Positions arginine 405–glycine 425 are mediates binding to Psi. Polar residues predominate over residues asparagine 426–glutamine 448.

In terms of assembly, component of the U1 snRNP. Interacts with Psi; essential for alternative splicing of P-element transposase. Interacts with the SMN complex.

Its subcellular location is the nucleus speckle. It is found in the nucleus. It localises to the nucleoplasm. Its function is as follows. Mediates the splicing of pre-mRNA by binding to the stem loop I region of U1-snRNA. Required during oogenesis for nurse cell chromatin dispersal. The chain is U1 small nuclear ribonucleoprotein 70 kDa (snRNP-U1-70K) from Drosophila melanogaster (Fruit fly).